The primary structure comprises 247 residues: Cell division protein ZapD (247 aa).

This sequence belongs to the ZapD family. In terms of assembly, interacts with FtsZ.

Its subcellular location is the cytoplasm. Its function is as follows. Cell division factor that enhances FtsZ-ring assembly. Directly interacts with FtsZ and promotes bundling of FtsZ protofilaments, with a reduction in FtsZ GTPase activity. This chain is Cell division protein ZapD, found in Escherichia coli O139:H28 (strain E24377A / ETEC).